Here is a 199-residue protein sequence, read N- to C-terminus: NADH-ubiquinone oxidoreductase chain 6 (199 aa).

5 consecutive transmembrane segments (helical) span residues 1-21, 27-47, 49-69, 87-107, and 150-170; these read MILFYVFVVLALVSGAMVIRA, SVLFLILVFCNTSGLLVLLGL, FFAMIFLVVYVGAIAVLFLFV, YLPVGGIIGLIFLLEIFLMVD, and FFLFLVSSLILLVALIGAIVL.

It belongs to the complex I subunit 6 family.

It localises to the mitochondrion membrane. The catalysed reaction is a ubiquinone + NADH + 5 H(+)(in) = a ubiquinol + NAD(+) + 4 H(+)(out). In terms of biological role, core subunit of the mitochondrial membrane respiratory chain NADH dehydrogenase (Complex I) that is believed to belong to the minimal assembly required for catalysis. Complex I functions in the transfer of electrons from NADH to the respiratory chain. The immediate electron acceptor for the enzyme is believed to be ubiquinone. This Marchantia polymorpha (Common liverwort) protein is NADH-ubiquinone oxidoreductase chain 6 (ND6).